A 328-amino-acid chain; its full sequence is Phenylalanine--tRNA ligase alpha subunit (328 aa).

E253 provides a ligand contact to Mg(2+).

This sequence belongs to the class-II aminoacyl-tRNA synthetase family. Phe-tRNA synthetase alpha subunit type 1 subfamily. Tetramer of two alpha and two beta subunits. The cofactor is Mg(2+).

It is found in the cytoplasm. It catalyses the reaction tRNA(Phe) + L-phenylalanine + ATP = L-phenylalanyl-tRNA(Phe) + AMP + diphosphate + H(+). The chain is Phenylalanine--tRNA ligase alpha subunit from Coxiella burnetii (strain CbuG_Q212) (Coxiella burnetii (strain Q212)).